We begin with the raw amino-acid sequence, 158 residues long: Large ribosomal subunit protein bL21 (158 aa).

A disordered region spans residues 106-158 (SKPKKAAAKPIKEEATAAKGTKDTAVEKKAEKTAEKKTASQKKAAVASKSKKD). Residues 115–143 (PIKEEATAAKGTKDTAVEKKAEKTAEKKT) are compositionally biased toward basic and acidic residues. The segment covering 146-158 (QKKAAVASKSKKD) has biased composition (low complexity).

The protein belongs to the bacterial ribosomal protein bL21 family. Part of the 50S ribosomal subunit. Contacts protein L20.

Functionally, this protein binds to 23S rRNA in the presence of protein L20. The chain is Large ribosomal subunit protein bL21 from Bartonella tribocorum (strain CIP 105476 / IBS 506).